Here is a 1413-residue protein sequence, read N- to C-terminus: GTPase-activating protein and VPS9 domain-containing protein 1 (1413 aa).

The region spanning 147-385 is the Ras-GAP domain; that stretch reads SYLLQVLRYL…AAFLDVVIGG (239 aa). Serine 227 is subject to Phosphoserine. A phosphothreonine mark is found at threonine 390 and threonine 458. Disordered regions lie at residues 448 to 474, 540 to 587, 718 to 799, and 826 to 852; these read KPGK…PANK, LSDG…GSNG, ESCS…PPSQ, and HYAR…ARLP. Positions 451-467 are enriched in polar residues; sequence KSSSLEMTPYSTPQLSP. A Phosphotyrosine modification is found at tyrosine 460. Serine 466 carries the post-translational modification Phosphoserine. Threonine 470 bears the Phosphothreonine mark. Phosphoserine occurs at positions 721, 725, and 736. The segment covering 737-756 has biased composition (polar residues); the sequence is SRPSTPGLSVVSGISATSED. At threonine 741 the chain carries Phosphothreonine. Serine 745 is modified (phosphoserine). Residues 757–768 are compositionally biased toward basic and acidic residues; it reads IPNKIEDLRSEC. Phosphoserine is present on residues serine 856, serine 882, serine 883, serine 888, serine 894, serine 946, serine 972, and serine 999. The segment covering 871 to 882 has biased composition (basic and acidic residues); it reads HSYPERLVRSRS. The disordered stretch occupies residues 871 to 957; sequence HSYPERLVRS…DEKSDRNRPW (87 aa). Positions 883–897 are enriched in low complexity; that stretch reads SDVVSSVRRPMSDPS. Positions 934-955 are enriched in basic and acidic residues; sequence DSSRGETEERKDSDDEKSDRNR. Residues 1011 to 1049 form a disordered region; sequence VMGDGESAHDSPRDETLQNISADDLPDSASQAAHPQDSA. The segment covering 1016-1026 has biased composition (basic and acidic residues); sequence ESAHDSPRDET. Serine 1031 and serine 1038 each carry phosphoserine. The VPS9 domain occupies 1273-1413; the sequence is ILRDQVLHEH…EFIKTIDDRK (141 aa).

The protein belongs to the GAPVD1 family. Interacts with TRIP10/CIP4. Interacts with RAB5A.

It is found in the membrane. The protein localises to the endosome. In terms of biological role, acts both as a GTPase-activating protein (GAP) and a guanine nucleotide exchange factor (GEF), and participates in various processes such as endocytosis, insulin receptor internalization or LC2A4/GLUT4 trafficking. Acts as a GEF for the Ras-related protein RAB31 by exchanging bound GDP for free GTP, leading to regulate LC2A4/GLUT4 trafficking. In the absence of insulin, it maintains RAB31 in an active state and promotes a futile cycle between LC2A4/GLUT4 storage vesicles and early endosomes, retaining LC2A4/GLUT4 inside the cells. Upon insulin stimulation, it is translocated to the plasma membrane, releasing LC2A4/GLUT4 from intracellular storage vesicles. Also involved in EGFR trafficking and degradation, possibly by promoting EGFR ubiquitination and subsequent degradation by the proteasome. Has GEF activity for Rab5 and GAP activity for Ras. This Bos taurus (Bovine) protein is GTPase-activating protein and VPS9 domain-containing protein 1 (GAPVD1).